We begin with the raw amino-acid sequence, 332 residues long: MTLLTRIKTETILLESDIKELIDILISPSIGTDIKYELLSSYSEREIQQQELTYIVRSLINTMYPHQPCYEGAMCVCGTGGDKSNSFNISTTVAFVVASAGVKVIKHGNKSITSNSGSTDLLNQMNIQTTTVDDTPNQLNEKDLVFIGATESYPIMKYMQPVRKMIGKPTILNLVGPLINPYHLTYQMVGVFDPTKLKLVAKTIKDLGRKRAIVLHGANGMDEATLSGDNLIYELTEDGEIKNYTLNATDYGLKHAPNSDFKGGSPEENLAISLNILNGKDQSSRRDVVLLNAGLSLYVAEKVDTIAEGIELATTLIDNGEALKKYHQMRGE.

Residues Gly78, Gly81 to Asp82, Ser86, Asn88 to Thr91, Lys106 to Ser114, and Ser118 each bind 5-phospho-alpha-D-ribose 1-diphosphate. Gly78 is a binding site for anthranilate. Mg(2+) is bound at residue Ser90. Asn109 is an anthranilate binding site. Position 163 (Arg163) interacts with anthranilate. Mg(2+) is bound by residues Asp222 and Glu223.

This sequence belongs to the anthranilate phosphoribosyltransferase family. Homodimer. Requires Mg(2+) as cofactor.

It catalyses the reaction N-(5-phospho-beta-D-ribosyl)anthranilate + diphosphate = 5-phospho-alpha-D-ribose 1-diphosphate + anthranilate. It participates in amino-acid biosynthesis; L-tryptophan biosynthesis; L-tryptophan from chorismate: step 2/5. Functionally, catalyzes the transfer of the phosphoribosyl group of 5-phosphorylribose-1-pyrophosphate (PRPP) to anthranilate to yield N-(5'-phosphoribosyl)-anthranilate (PRA). The sequence is that of Anthranilate phosphoribosyltransferase from Staphylococcus aureus (strain Mu3 / ATCC 700698).